Reading from the N-terminus, the 78-residue chain is Large ribosomal subunit protein bL28 (78 aa).

Residues 1-21 (MSRVCQVTGKRPMSGNNRSHA) are disordered.

This sequence belongs to the bacterial ribosomal protein bL28 family.

The sequence is that of Large ribosomal subunit protein bL28 from Photorhabdus laumondii subsp. laumondii (strain DSM 15139 / CIP 105565 / TT01) (Photorhabdus luminescens subsp. laumondii).